A 311-amino-acid polypeptide reads, in one-letter code: Transcription factor bHLH145 (311 aa).

A bHLH domain is found at 253-302 (FLKRSKLSSNKIGEEKIFETVSLLRSVVPGEELVDPILVIDRAIDYLKSL).

In terms of assembly, homodimer.

It is found in the nucleus. The chain is Transcription factor bHLH145 (BHLH145) from Arabidopsis thaliana (Mouse-ear cress).